We begin with the raw amino-acid sequence, 484 residues long: MTKEQQLAERIIAAVGGMDNIDSVMNCMTRVRIKVLDENKVDDQELRHIDGVMGVIHDERIQVVVGPGTVNKVANHMAELSGVKLGDPIPHNHNDSEKMDYKSYAADKAKANKEAHKAKQKNGKLNKVLKSIANIFIPLIPAFIGAGLIGGIAAVLSNLMVAGYISGAWITQLITVFNVIKDGMLAYLAIFTGINAAKEFGATPGLGGVIGGTTLLTGIAGKNILMNVFTGEPLQPGQGGIIGVIFAVWILSIVEKRLHKIVPNAIDIIVTPAIALLIVGLLTIFIFMPLAGFVSDSLVSVVNGIISIGGVFSGFIIGASFLPLVMLGLHHIFTPIHIEMINQSGATYLLPIAAMAGAGQVGAALALWVRCKRNTTLRNTLKGALPVGFLGIGEPLIYGVTLPLGRPFLTACIGGGIGGAVIGGIGHIGAKAIGPSGVSLLPLISDNMYLGYIAGLLTAYAGGFVCTYLFGTTKAMRQTDLLGD.

One can recognise a PTS EIIB type-1 domain in the interval 5–87 (QQLAERIIAA…AELSGVKLGD (83 aa)). Cys27 serves as the catalytic Phosphocysteine intermediate; for EIIB activity. The region spanning 130 to 484 (KSIANIFIPL…AMRQTDLLGD (355 aa)) is the PTS EIIC type-1 domain. A run of 10 helical transmembrane segments spans residues 135–155 (IFIP…IAAV), 160–180 (MVAG…FNVI), 200–220 (FGAT…TGIA), 234–254 (LQPG…LSIV), 274–294 (IALL…AGFV), 305–325 (IISI…LPLV), 349–369 (LLPI…ALWV), 384–404 (ALPV…TLPL), 408–428 (FLTA…IGHI), and 450–470 (LGYI…TYLF).

Its subcellular location is the cell membrane. The catalysed reaction is N-acetyl-beta-D-muramate-(1-&gt;4)-N-acetyl-D-glucosamine(out) + N(pros)-phospho-L-histidyl-[protein] = 6-phospho-N-acetyl-beta-D-muramate-(1-&gt;4)-N-acetyl-D-glucosamine(in) + L-histidyl-[protein]. It participates in cell wall biogenesis; peptidoglycan recycling. The phosphoenolpyruvate-dependent sugar phosphotransferase system (sugar PTS), a major carbohydrate active transport system, catalyzes the phosphorylation of incoming sugar substrates concomitantly with their translocation across the cell membrane. This system is involved in the uptake and phosphorylation of MurNAc-GlcNAc, the principle peptidoglycan turnover product of S.aureus, yielding cytoplasmic MurNAc 6P-GlcNAc. The sequence is that of PTS system MurNAc-GlcNAc-specific EIIBC component from Staphylococcus aureus (strain bovine RF122 / ET3-1).